A 564-amino-acid polypeptide reads, in one-letter code: MMNEDISIIDGHNSFLTEKSTVLLTQAKRTLEDEKEMITPPSSTVRKTMKEVNKRPSHPLSPDHSSPIAPSKAKRQRSDTCARSNGNLTLEEILQSLERRRINGELAKKPPYSYATLICLAILQSQEGKLTLSQIYHWIHVHFPYYKQKDASWQNSIRHNLSLNDAFIKTEKSCDGKGHFWEVRPGAETKFFKGENRGYEFVKDSLQDIGKYFEIDSTLDELEQVESGEGNDDLPDEEEREEAGKFPSIEIQLNSSPILRVSQLHHIPQLKTDNSVLNPHENLESMRNMIENDVNNIDSLEPPYVMKKYHTSLGLPSLVNAKDHFQAGVKNNNITQANRFNTLPITSAKSPQNFRKYFTSFNSNFEDLSPLRSNVGAGSLLDPLPYSPLKLYDQKNLALMSKPQSQQSYSNSQLPPPPSSHGSDLLKTPKMRHSDGLEKTPSRLISTPKDGNSILRKWQTPSHLFEDLYCSPLFRAIETPIRYITTPGGTLETQISPRKSSAPDVLTSATNSKFASSGLFGVDVYSVWKRATEKISDGNNTTDSNQKHHPYHNHPSNDSGNEKN.

The interval 33-80 is disordered; it reads DEKEMITPPSSTVRKTMKEVNKRPSHPLSPDHSSPIAPSKAKRQRSDT. Residues 58–67 show a composition bias toward low complexity; sequence HPLSPDHSSP. Residues 108–199 constitute a DNA-binding region (fork-head); the sequence is KKPPYSYATL…KFFKGENRGY (92 aa). The segment covering 224–241 has biased composition (acidic residues); sequence QVESGEGNDDLPDEEERE. Residues 224–246 form a disordered region; the sequence is QVESGEGNDDLPDEEEREEAGKF. Thr-342 is subject to Phosphothreonine. The interval 401–448 is disordered; sequence SKPQSQQSYSNSQLPPPPSSHGSDLLKTPKMRHSDGLEKTPSRLISTP. Positions 402–413 are enriched in polar residues; sequence KPQSQQSYSNSQ. Positions 432 to 441 are enriched in basic and acidic residues; the sequence is RHSDGLEKTP. Ser-496 bears the Phosphoserine mark. A disordered region spans residues 536–564; that stretch reads SDGNNTTDSNQKHHPYHNHPSNDSGNEKN. A compositionally biased stretch (polar residues) spans 554–564; that stretch reads HPSNDSGNEKN.

Post-translationally, phosphorylated by CDK1.

Its subcellular location is the cytoplasm. It is found in the nucleus. In terms of biological role, transcription factor regulating the cell cycle specific transcription of a spindle pole body (SPB) calmodulin binding protein SPC110. Required for full induction of SPC110 transcription in late G1. Binds to DNA consensus sequence 5'-[AT]AA[TC]AAACAA[AT]-3'. Dosage dependent suppressor of calmodulin mutants which have specific defects in SPB assembly. The protein is Forkhead transcription factor HCM1 (HCM1) of Saccharomyces cerevisiae (strain ATCC 204508 / S288c) (Baker's yeast).